A 475-amino-acid chain; its full sequence is Aspartyl/glutamyl-tRNA(Asn/Gln) amidotransferase subunit B (475 aa).

The protein belongs to the GatB/GatE family. GatB subfamily. As to quaternary structure, heterotrimer of A, B and C subunits.

The enzyme catalyses L-glutamyl-tRNA(Gln) + L-glutamine + ATP + H2O = L-glutaminyl-tRNA(Gln) + L-glutamate + ADP + phosphate + H(+). It carries out the reaction L-aspartyl-tRNA(Asn) + L-glutamine + ATP + H2O = L-asparaginyl-tRNA(Asn) + L-glutamate + ADP + phosphate + 2 H(+). Allows the formation of correctly charged Asn-tRNA(Asn) or Gln-tRNA(Gln) through the transamidation of misacylated Asp-tRNA(Asn) or Glu-tRNA(Gln) in organisms which lack either or both of asparaginyl-tRNA or glutaminyl-tRNA synthetases. The reaction takes place in the presence of glutamine and ATP through an activated phospho-Asp-tRNA(Asn) or phospho-Glu-tRNA(Gln). The protein is Aspartyl/glutamyl-tRNA(Asn/Gln) amidotransferase subunit B of Agathobacter rectalis (strain ATCC 33656 / DSM 3377 / JCM 17463 / KCTC 5835 / VPI 0990) (Eubacterium rectale).